A 262-amino-acid chain; its full sequence is tRNA (guanine-N(1)-)-methyltransferase (262 aa).

S-adenosyl-L-methionine is bound by residues G113 and 137–142; that span reads IGDYVL.

This sequence belongs to the RNA methyltransferase TrmD family. In terms of assembly, homodimer.

The protein resides in the cytoplasm. It carries out the reaction guanosine(37) in tRNA + S-adenosyl-L-methionine = N(1)-methylguanosine(37) in tRNA + S-adenosyl-L-homocysteine + H(+). In terms of biological role, specifically methylates guanosine-37 in various tRNAs. This is tRNA (guanine-N(1)-)-methyltransferase from Saccharopolyspora erythraea (strain ATCC 11635 / DSM 40517 / JCM 4748 / NBRC 13426 / NCIMB 8594 / NRRL 2338).